A 152-amino-acid polypeptide reads, in one-letter code: S-ribosylhomocysteine lyase (152 aa).

Fe cation contacts are provided by H53, H57, and C120.

This sequence belongs to the LuxS family. As to quaternary structure, homodimer. Requires Fe cation as cofactor.

It catalyses the reaction S-(5-deoxy-D-ribos-5-yl)-L-homocysteine = (S)-4,5-dihydroxypentane-2,3-dione + L-homocysteine. In terms of biological role, involved in the synthesis of autoinducer 2 (AI-2) which is secreted by bacteria and is used to communicate both the cell density and the metabolic potential of the environment. The regulation of gene expression in response to changes in cell density is called quorum sensing. Catalyzes the transformation of S-ribosylhomocysteine (RHC) to homocysteine (HC) and 4,5-dihydroxy-2,3-pentadione (DPD). This is S-ribosylhomocysteine lyase from Enterococcus faecalis (strain ATCC 700802 / V583).